We begin with the raw amino-acid sequence, 1040 residues long: Multidrug resistance protein MdtB (1040 aa).

Helical transmembrane passes span 16-36, 347-367, 369-389, 396-416, 440-460, 472-492, 537-557, 863-883, 888-908, 911-931, 968-988, and 998-1018; these read FIMRPVATTLLMVAILLAGII, LMMAIALVVMIIYLFLRNIPA, IIPGVAVPLSLIGTFAVMVFL, LTLMALTIATGFVVDDAIVVI, IGFTIISLIFSLIAVLIPLLF, FAITLAVAILISAVVSLTLTP, WLTLSVALSTLLLSVLLWVFI, LGSTVWLIVAAVVAMYIVLGI, FIHPITILSTLPTAGVGALLA, IAGSELDVIAIIGIILLIGIV, ILMTTLAALLGALPLMLSTGV, and IGMVGGLIVSQVLTLFTTPVI.

Belongs to the resistance-nodulation-cell division (RND) (TC 2.A.6) family. MdtB subfamily. As to quaternary structure, part of a tripartite efflux system composed of MdtA, MdtB and MdtC. MdtB forms a heteromultimer with MdtC.

Its subcellular location is the cell inner membrane. The chain is Multidrug resistance protein MdtB from Shigella boydii serotype 4 (strain Sb227).